The primary structure comprises 420 residues: Serine/threonine transporter SstT (420 aa).

A run of 9 helical transmembrane segments spans residues 14–34 (IMIGIVIGTTLGFLVPEWTFI), 40–60 (LFVGALKAIAPILVFVLIIAS), 71–91 (YVGSILVVYLLATFLAAVVAV), 172–192 (ITTVVQMIIGIAPIGILGLVF), 210–230 (LLLLIGTMAVVALVVYPAIVF), 283–303 (IPLGATINMGGAAITITIMTL), 309–329 (LGMSVPIYLALLLSIIAAVSA), 332–352 (ASGIAGGSLLLIPLACSLFGI), and 356–376 (IAMQVVGVGFIVGVVQDSIET).

This sequence belongs to the dicarboxylate/amino acid:cation symporter (DAACS) (TC 2.A.23) family.

The protein localises to the cell membrane. The enzyme catalyses L-serine(in) + Na(+)(in) = L-serine(out) + Na(+)(out). It catalyses the reaction L-threonine(in) + Na(+)(in) = L-threonine(out) + Na(+)(out). Involved in the import of serine and threonine into the cell, with the concomitant import of sodium (symport system). The protein is Serine/threonine transporter SstT of Enterococcus faecalis (strain ATCC 700802 / V583).